The chain runs to 218 residues: MRTTTKKQIERTDPTLPNVHHLVVGATGSGKSAFIRDQVDFKGARVLAWDVDEDYRLPRVRSIKQFEKLVKKSGFGAIRCALTVEPTEENFERFCQLVFAISHAGAPMVVIVEELADVARIGKASPHWGQLSRKGRKYGVQLYVATQSPQEIDKTIVRQCNFKFCGALNSASAWRSMADNLDLSTREIKQLENIPKKQVQYWLKDGTRPTEKKTLTFK.

It is found in the virion membrane. This Pseudoalteromonas espejiana (Bacteriophage PM2) protein is Protein P9 (IX).